The following is a 323-amino-acid chain: tRNA U34 carboxymethyltransferase (323 aa).

Carboxy-S-adenosyl-L-methionine-binding positions include Lys91, Trp105, Lys110, Gly130, 152-154 (DPT), 181-182 (IE), Met196, Tyr200, and Arg315.

This sequence belongs to the class I-like SAM-binding methyltransferase superfamily. CmoB family. In terms of assembly, homotetramer.

It carries out the reaction carboxy-S-adenosyl-L-methionine + 5-hydroxyuridine(34) in tRNA = 5-carboxymethoxyuridine(34) in tRNA + S-adenosyl-L-homocysteine + H(+). Its function is as follows. Catalyzes carboxymethyl transfer from carboxy-S-adenosyl-L-methionine (Cx-SAM) to 5-hydroxyuridine (ho5U) to form 5-carboxymethoxyuridine (cmo5U) at position 34 in tRNAs. This Escherichia coli (strain K12 / MC4100 / BW2952) protein is tRNA U34 carboxymethyltransferase.